The chain runs to 653 residues: Serine/threonine-protein phosphatase with EF-hands 1 (653 aa).

The IQ domain occupies 16–45; that stretch reads SLRAALIIQNWYRGYKARLKARQHYALTIF. A catalytic region spans residues 121–455; the sequence is IDLLLEAFKE…PRFFQYQVTK (335 aa). Residues D172, H174, D201, and N233 each coordinate Mn(2+). H234 (proton donor) is an active-site residue. Mn(2+) contacts are provided by H285 and H403. 3 EF-hand domains span residues 483–518, 566–601, and 606–641; these read SRKS…ILGL, RYRS…FSSH, and IDDS…VHRY. Residues D579, D581, S583, E590, D619, N621, D623, S625, and E630 each coordinate Ca(2+).

This sequence belongs to the PPP phosphatase family. Requires Mn(2+) as cofactor. The cofactor is Mg(2+). In terms of tissue distribution, detected in retina and retinal derived Y-79 retinoblastoma cells. Also found in fetal brain.

The catalysed reaction is O-phospho-L-seryl-[protein] + H2O = L-seryl-[protein] + phosphate. The enzyme catalyses O-phospho-L-threonyl-[protein] + H2O = L-threonyl-[protein] + phosphate. Its activity is regulated as follows. Activated by calcium. Its function is as follows. May have a role in the recovery or adaptation response of photoreceptors. May have a role in development. This chain is Serine/threonine-protein phosphatase with EF-hands 1 (PPEF1), found in Homo sapiens (Human).